The sequence spans 912 residues: Type II beta methyltransferase M.BslI (912 aa).

It belongs to the N(4)/N(6)-methyltransferase family. N(4) subfamily.

It catalyses the reaction a 2'-deoxycytidine in DNA + S-adenosyl-L-methionine = an N(4)-methyl-2'-deoxycytidine in DNA + S-adenosyl-L-homocysteine + H(+). Its function is as follows. A beta subtype methylase. Recognizes the double-stranded sequence 5'-CCN(7)GG-3', methylates C-2 on both strands, and protects the DNA from cleavage by the BslI endonuclease. In Bacillus sp. (strain NEB-606), this protein is Type II beta methyltransferase M.BslI (bslIM).